The following is a 367-amino-acid chain: tRNA-specific 2-thiouridylase MnmA (367 aa).

ATP-binding positions include Gly-12–Ser-19 and Met-38. Residues Asn-98–Asp-100 are interaction with target base in tRNA. Cys-103 acts as the Nucleophile in catalysis. The cysteines at positions 103 and 200 are disulfide-linked. Gly-128 serves as a coordination point for ATP. The tract at residues Lys-150–Gln-152 is interaction with tRNA. Cys-200 serves as the catalytic Cysteine persulfide intermediate. The interaction with tRNA stretch occupies residues Arg-312–Tyr-313.

The protein belongs to the MnmA/TRMU family. As to quaternary structure, interacts with TusE.

The protein localises to the cytoplasm. It catalyses the reaction S-sulfanyl-L-cysteinyl-[protein] + uridine(34) in tRNA + AH2 + ATP = 2-thiouridine(34) in tRNA + L-cysteinyl-[protein] + A + AMP + diphosphate + H(+). Functionally, catalyzes the 2-thiolation of uridine at the wobble position (U34) of tRNA(Lys), tRNA(Glu) and tRNA(Gln), leading to the formation of s(2)U34, the first step of tRNA-mnm(5)s(2)U34 synthesis. Sulfur is provided by IscS, via a sulfur-relay system. Binds ATP and its substrate tRNAs. The sequence is that of tRNA-specific 2-thiouridylase MnmA from Proteus mirabilis (strain HI4320).